A 143-amino-acid polypeptide reads, in one-letter code: Putative phosphotransferase IIA component SgcA (143 aa).

The PTS EIIA type-2 domain occupies 1 to 143 (MINDIKWVQA…DDALFALVSG (143 aa)). Catalysis depends on His63, which acts as the Tele-phosphohistidine intermediate.

The protein localises to the cytoplasm. In terms of biological role, the phosphoenolpyruvate-dependent sugar phosphotransferase system (sugar PTS), a major carbohydrate active -transport system, catalyzes the phosphorylation of incoming sugar substrates concomitantly with their translocation across the cell membrane. The sequence is that of Putative phosphotransferase IIA component SgcA (sgcA) from Escherichia coli (strain K12).